A 273-amino-acid chain; its full sequence is MQWNVPKTVFRLAHRTCMEPHKAGLLGHCQNMKGPLLLYTLESRVVVVQGPQKRWLHLPTAQCVAKERKPFTAVQSQPGVFHHKQWEQDILSKRVLSSSATSSGPPSEKKEDPDPLQDRSISLYQRFKKTFRQYGKVLIPVHLITSAVWFGTFYYAAMKGVNVVPFLELIGLPDSIVNILKNSQSGNALTAYALFKIATPARYTVTLGGTSFTVKYLRSRGYMSTPPPVKEYLQDKMEETKELLTEKMEETKDRLTEKLQETKGKVSLKKKVE.

The segment covering 97–106 has biased composition (low complexity); that stretch reads SSSATSSGPP. The disordered stretch occupies residues 97–116; it reads SSSATSSGPPSEKKEDPDPL. Residues 107–116 are compositionally biased toward basic and acidic residues; the sequence is SEKKEDPDPL. The 113-residue stretch at 118-230 folds into the DUF1279 domain; the sequence is DRSISLYQRF…GYMSTPPPVK (113 aa). A helical transmembrane segment spans residues 137–157; the sequence is VLIPVHLITSAVWFGTFYYAA. Positions 230 to 269 form a coiled coil; it reads KEYLQDKMEETKELLTEKMEETKDRLTEKLQETKGKVSLK. The tract at residues 247 to 273 is disordered; the sequence is KMEETKDRLTEKLQETKGKVSLKKKVE.

This sequence belongs to the FAM210 family. Interacts with ATAD3A.

The protein resides in the membrane. It localises to the mitochondrion. It is found in the cytoplasm. May play a role in the structure and strength of both muscle and bone. The sequence is that of Protein FAM210A (FAM210A) from Bos taurus (Bovine).